The chain runs to 67 residues: LPS-assembly lipoprotein LptM (67 aa).

An N-terminal signal peptide occupies residues 1-19 (MKNVFKTLAVLLTLFSLTG). Residue cysteine 20 is the site of N-palmitoyl cysteine attachment. Cysteine 20 is lipidated: S-diacylglycerol cysteine. Residues 26–67 (LYFPPADKNAPPPTKKVDSQTQSTMPDKNDRATGDGPSQVNY) are disordered.

This sequence belongs to the LptM family. Interacts with the outer membrane embedded portion of the LPS translocon formed by LptD and LptE (LptDE).

It localises to the cell outer membrane. Its function is as follows. Component of the lipopolysaccharide (LPS) transport (Lpt) pathway that promotes efficient assembly of the outer membrane LPS translocon (LptDE) by the BAM complex. Facilitates oxidative maturation of LptD by stabilizing a conformation of the LPS translocon in which LptD can efficiently acquire native disulfide bonds, thereby activating the LPS translocon. The sequence is that of LPS-assembly lipoprotein LptM from Salmonella typhi.